The primary structure comprises 316 residues: Transaldolase 2 (316 aa).

Lys131 serves as the catalytic Schiff-base intermediate with substrate.

This sequence belongs to the transaldolase family. Type 1 subfamily. Homodimer.

It is found in the cytoplasm. It catalyses the reaction D-sedoheptulose 7-phosphate + D-glyceraldehyde 3-phosphate = D-erythrose 4-phosphate + beta-D-fructose 6-phosphate. It functions in the pathway carbohydrate degradation; pentose phosphate pathway; D-glyceraldehyde 3-phosphate and beta-D-fructose 6-phosphate from D-ribose 5-phosphate and D-xylulose 5-phosphate (non-oxidative stage): step 2/3. Transaldolase is important for the balance of metabolites in the pentose-phosphate pathway. The protein is Transaldolase 2 of Salmonella choleraesuis (strain SC-B67).